Here is a 335-residue protein sequence, read N- to C-terminus: Methionine import ATP-binding protein MetN (335 aa).

Positions 2–241 constitute an ABC transporter domain; sequence IQFQRLHKSY…PKHATTRRFV (240 aa). An ATP-binding site is contributed by 38–45; that stretch reads GHSGAGKS.

This sequence belongs to the ABC transporter superfamily. Methionine importer (TC 3.A.1.24) family. The complex is composed of two ATP-binding proteins (MetN), two transmembrane proteins (MetI) and a solute-binding protein (MetQ).

Its subcellular location is the cell inner membrane. The catalysed reaction is L-methionine(out) + ATP + H2O = L-methionine(in) + ADP + phosphate + H(+). It catalyses the reaction D-methionine(out) + ATP + H2O = D-methionine(in) + ADP + phosphate + H(+). Part of the ABC transporter complex MetNIQ involved in methionine import. Responsible for energy coupling to the transport system. This is Methionine import ATP-binding protein MetN from Xanthomonas axonopodis pv. citri (strain 306).